The sequence spans 341 residues: Peptidoglycan recognition protein 3 (341 aa).

The first 17 residues, 1 to 17 (MGTLPWLLAFFILGLQA), serve as a signal peptide directing secretion. 2 N-acetylmuramoyl-L-alanine amidase domains span residues 77–179 (TIGW…KVCP) and 200–325 (PAKY…ILSP). The N-linked (GlcNAc...) asparagine glycan is linked to Asn113. 3 cysteine pairs are disulfide-bonded: Cys178-Cys300, Cys194-Cys238, and Cys214-Cys220. 3 residues coordinate peptidoglycan: His231, Arg235, and Tyr242. The interaction with murein stretch occupies residues 264–269 (HTYGFN).

This sequence belongs to the N-acetylmuramoyl-L-alanine amidase 2 family. As to quaternary structure, monomer. Homodimer; disulfide-linked. Heterodimer with PGLYRP4; disulfide-linked. N-glycosylated. Detected in skin epidermis, eccrine sweat glands and ducts, ciliary body epithelial cells of the eye, in small intestine, colon, stomach and in mature epithelial cells of the tongue (at protein level). Highly expressed in skin and esophagus, expressed also in tonsils and thymus and to a much lesser extent in the stomach, descending colon, rectum and brain.

Its subcellular location is the secreted. In terms of biological role, pattern receptor that binds to murein peptidoglycans (PGN) of Gram-positive bacteria. Has bactericidal activity towards Gram-positive bacteria. May kill Gram-positive bacteria by interfering with peptidoglycan biosynthesis. Also binds to Gram-negative bacteria, and has bacteriostatic activity towards Gram-negative bacteria. Plays a role in innate immunity. The protein is Peptidoglycan recognition protein 3 (PGLYRP3) of Homo sapiens (Human).